The following is a 1342-amino-acid chain: DNA-directed RNA polymerase subunit beta (1342 aa).

It belongs to the RNA polymerase beta chain family. The RNAP catalytic core consists of 2 alpha, 1 beta, 1 beta' and 1 omega subunit. When a sigma factor is associated with the core the holoenzyme is formed, which can initiate transcription.

The enzyme catalyses RNA(n) + a ribonucleoside 5'-triphosphate = RNA(n+1) + diphosphate. Functionally, DNA-dependent RNA polymerase catalyzes the transcription of DNA into RNA using the four ribonucleoside triphosphates as substrates. This is DNA-directed RNA polymerase subunit beta from Aeromonas hydrophila subsp. hydrophila (strain ATCC 7966 / DSM 30187 / BCRC 13018 / CCUG 14551 / JCM 1027 / KCTC 2358 / NCIMB 9240 / NCTC 8049).